A 560-amino-acid polypeptide reads, in one-letter code: Membrane protein insertase YidC (560 aa).

A helical transmembrane segment spans residues 1-21 (MDIKRTILIAALAVVSYVMVL). A disordered region spans residues 42–66 (VAPGLPDGVPAGNNGASADVPSANA). Helical transmembrane passes span 341 to 361 (LELT…FWLL), 367 to 387 (LLGN…GLFF), 437 to 457 (LGGC…YWVL), 468 to 488 (WMLW…PIIM), and 515 to 535 (PIIF…YWVV).

Belongs to the OXA1/ALB3/YidC family. Type 1 subfamily. In terms of assembly, interacts with the Sec translocase complex via SecD. Specifically interacts with transmembrane segments of nascent integral membrane proteins during membrane integration.

It is found in the cell inner membrane. Functionally, required for the insertion and/or proper folding and/or complex formation of integral membrane proteins into the membrane. Involved in integration of membrane proteins that insert both dependently and independently of the Sec translocase complex, as well as at least some lipoproteins. Aids folding of multispanning membrane proteins. The protein is Membrane protein insertase YidC of Pseudomonas putida (strain GB-1).